The primary structure comprises 105 residues: U1-sicaritoxin-Li1b (105 aa).

A signal peptide spans 1 to 19; it reads MKLLFEGLLVLVLIAFVVA. Positions 20–36 are excised as a propeptide; that stretch reads EFESDAEKWEALITQER. 4 disulfides stabilise this stretch: C38-C55, C46-C60, C54-C73, and C62-C71. R82 carries the post-translational modification Arginine amide. The propeptide occupies 86–105; it reads ALMVDPETHRMLSLHRLSEE.

It belongs to the neurotoxin 28 (Litx) family. In terms of tissue distribution, expressed by the venom gland.

The protein localises to the secreted. Toxin active against insects (S.frugiperda larvae). May act on sodium (Nav) or calcium (Cav) channels. The protein is U1-sicaritoxin-Li1b of Loxosceles intermedia (Brown spider).